The chain runs to 251 residues: Developmental protein SEPALLATA 1 (251 aa).

The MADS-box domain occupies 3–57 (RGRVELKRIENKINRQVTFAKRRNGLLKKAYELSVLCDAEVALIIFSNRGKLYEF). The stretch at 85-176 (AKELENSYRE…ALAMKLDDMI (92 aa)) forms a coiled coil. The K-box domain maps to 88–178 (LENSYREYLK…AMKLDDMIGV (91 aa)).

As to quaternary structure, heterodimer with AGAMOUS capable of binding to CArG-box sequences. Interacts with AGL16. Interacts with TT16/AGL32. In terms of tissue distribution, expressed mainly in carpels, and weakly in stamens.

The protein localises to the nucleus. Probable transcription factor. Functions with SEPALLATA2/AGL4 and SEPALLATA3/AGL9 to ensure proper development of petals, stamens and carpels, and to prevent the indeterminate growth of the flower meristem. Forms a heterodimer via the K-box domain with AGAMOUS, that could be involved in genes regulation during floral meristem development. This chain is Developmental protein SEPALLATA 1 (SEP1), found in Arabidopsis thaliana (Mouse-ear cress).